A 179-amino-acid chain; its full sequence is ATP synthase subunit delta (179 aa).

Belongs to the ATPase delta chain family. F-type ATPases have 2 components, F(1) - the catalytic core - and F(0) - the membrane proton channel. F(1) has five subunits: alpha(3), beta(3), gamma(1), delta(1), epsilon(1). F(0) has three main subunits: a(1), b(2) and c(10-14). The alpha and beta chains form an alternating ring which encloses part of the gamma chain. F(1) is attached to F(0) by a central stalk formed by the gamma and epsilon chains, while a peripheral stalk is formed by the delta and b chains.

The protein localises to the cell membrane. Its function is as follows. F(1)F(0) ATP synthase produces ATP from ADP in the presence of a proton or sodium gradient. F-type ATPases consist of two structural domains, F(1) containing the extramembraneous catalytic core and F(0) containing the membrane proton channel, linked together by a central stalk and a peripheral stalk. During catalysis, ATP synthesis in the catalytic domain of F(1) is coupled via a rotary mechanism of the central stalk subunits to proton translocation. This protein is part of the stalk that links CF(0) to CF(1). It either transmits conformational changes from CF(0) to CF(1) or is implicated in proton conduction. This is ATP synthase subunit delta from Staphylococcus saprophyticus subsp. saprophyticus (strain ATCC 15305 / DSM 20229 / NCIMB 8711 / NCTC 7292 / S-41).